The following is a 328-amino-acid chain: Tetraacyldisaccharide 4'-kinase (328 aa).

T55–T62 serves as a coordination point for ATP.

It belongs to the LpxK family.

The enzyme catalyses a lipid A disaccharide + ATP = a lipid IVA + ADP + H(+). Its pathway is glycolipid biosynthesis; lipid IV(A) biosynthesis; lipid IV(A) from (3R)-3-hydroxytetradecanoyl-[acyl-carrier-protein] and UDP-N-acetyl-alpha-D-glucosamine: step 6/6. Its function is as follows. Transfers the gamma-phosphate of ATP to the 4'-position of a tetraacyldisaccharide 1-phosphate intermediate (termed DS-1-P) to form tetraacyldisaccharide 1,4'-bis-phosphate (lipid IVA). The sequence is that of Tetraacyldisaccharide 4'-kinase from Hamiltonella defensa subsp. Acyrthosiphon pisum (strain 5AT).